The primary structure comprises 483 residues: Rhamnulokinase (483 aa).

11–15 (ASSGR) is a binding site for ATP. Residues Gly-79 and 234–236 (HDT) contribute to the substrate site. Asp-235 acts as the Proton acceptor in catalysis. Thr-257 serves as a coordination point for ATP. Asn-294 contacts substrate. Gln-302 contacts ATP. A disulfide bond links Cys-352 and Cys-369. An ATP-binding site is contributed by Gly-401.

Belongs to the rhamnulokinase family. Mg(2+) serves as cofactor.

It carries out the reaction L-rhamnulose + ATP = L-rhamnulose 1-phosphate + ADP + H(+). It functions in the pathway carbohydrate degradation; L-rhamnose degradation; glycerone phosphate from L-rhamnose: step 2/3. Functionally, involved in the catabolism of L-rhamnose (6-deoxy-L-mannose). Catalyzes the transfer of the gamma-phosphate group from ATP to the 1-hydroxyl group of L-rhamnulose to yield L-rhamnulose 1-phosphate. The polypeptide is Rhamnulokinase (Listeria monocytogenes serovar 1/2a (strain ATCC BAA-679 / EGD-e)).